The following is a 540-amino-acid chain: uncharacterized protein (540 aa).

2 consecutive ABC transporter domains span residues 2–252 (IAVN…KLSQ) and 320–537 (LRVE…LTEL). 34–41 (GANGAGKS) provides a ligand contact to ATP.

Belongs to the ABC transporter superfamily.

This is an uncharacterized protein from Bacillus subtilis (strain 168).